The sequence spans 476 residues: Protein transport protein Sec61 subunit alpha-like 2 (476 aa).

Residues 2–33 lie on the Cytoplasmic side of the membrane; sequence AIKFLEVIKPFCAVLPEIQKPERRIQFKEKVL. Residues 34–53 form a helical membrane-spanning segment; it reads WTAITLFIFLVCCQIPLFGI. Over 54–76 the chain is Lumenal; that stretch reads MSSDSADPFYWMRVIMASNRGTL. The helical transmembrane segment at 77 to 96 threads the bilayer; that stretch reads MELGISPIVTSGLIMQLLAG. Topologically, residues 97 to 117 are cytoplasmic; sequence AKIIEVGDTPKDRALFNGAQK. Residues 118 to 138 traverse the membrane as a helical segment; the sequence is LFGMIITIGQAVVYVMTGMYG. Over 139–144 the chain is Lumenal; that stretch reads DPSEMG. The helical transmembrane segment at 145–165 threads the bilayer; sequence AGICLLIIIQLFVAGLIVLLL. At 166-172 the chain is on the cytoplasmic side; sequence DELLQKG. A helical membrane pass occupies residues 173–193; the sequence is YGLGSGISLFIATNICETIVW. The Lumenal portion of the chain corresponds to 194-240; it reads KAFSPTTVNTGRGTEFEGAIIALFHLLATRTDKVRALREAFYRQNLP. Residues 241 to 261 traverse the membrane as a helical segment; the sequence is NLMNLIATIFVFAVVIYFQGF. The Cytoplasmic segment spans residues 262–288; sequence RVDLPIKSARYRGQYNTYPIKLFYTSN. Residues 289–309 form a helical membrane-spanning segment; sequence IPIILQSALVSNLYVISQMLS. Topologically, residues 310 to 354 are lumenal; the sequence is TRFSGNFLVNLLGTWSDTSTGGPARAYPVGGLCYYLSPPESFGTV. Residues 355-375 form a helical membrane-spanning segment; that stretch reads LEDPIHAIIYIIFMLGSCAFF. Over 376–420 the chain is Cytoplasmic; sequence SKTWIEVSGSSAKDVAKQLKEQQMVMRGHRETSMVHELNRYIPTA. A helical membrane pass occupies residues 421–441; the sequence is AAFGGLCIGGLSVMADFLGAI. Residues 442–445 are Lumenal-facing; that stretch reads GSGT. Residues 446-462 traverse the membrane as a helical segment; sequence GILLAVTIIYQYFEIFV. Residues 463-476 lie on the Cytoplasmic side of the membrane; that stretch reads KEQSEVGSVGALLF.

This sequence belongs to the SecY/SEC61-alpha family. The SEC61 channel-forming translocon complex consists of channel-forming core components SEC61A1, SEC61B and SEC61G and different auxiliary components such as SEC62 and SEC63.

The protein resides in the endoplasmic reticulum membrane. Component of SEC61 channel-forming translocon complex that mediates transport of signal peptide-containing precursor polypeptides across the endoplasmic reticulum (ER). Forms a ribosome receptor and a gated pore in the ER membrane, both functions required for cotranslational translocation of nascent polypeptides. This Danio rerio (Zebrafish) protein is Protein transport protein Sec61 subunit alpha-like 2 (sec61al2).